The following is a 392-amino-acid chain: Sugar efflux transporter A (392 aa).

The Cytoplasmic portion of the chain corresponds to 1-10; the sequence is MIWIMTMARR. The chain crosses the membrane as a helical span at residues 11–31; the sequence is MNGVYAAFMLVAFMMGVAGAL. Over 32-48 the chain is Periplasmic; that stretch reads QAPTLSLFLSREVGAQP. A helical membrane pass occupies residues 49 to 69; the sequence is FWIGLFYTVNAIAGIGVSLWL. The Cytoplasmic segment spans residues 70–81; the sequence is AKRSDSQGDRRK. A helical transmembrane segment spans residues 82 to 102; it reads LIIFCCLMAIGNALLFAFNRH. The Periplasmic segment spans residues 103 to 106; that stretch reads YLTL. A helical transmembrane segment spans residues 107–127; the sequence is ITCGVLLASLANTAMPQLFAL. Over 128–149 the chain is Cytoplasmic; it reads AREYADNSAREVVMFSSVMRAQ. A helical transmembrane segment spans residues 150-170; that stretch reads LSLAWVIGPPLAFMLALNYGF. Residue Thr171 is a topological domain, periplasmic. A helical transmembrane segment spans residues 172-192; it reads VMFSIAAGIFTLSLVLIAFML. Topologically, residues 193–219 are cytoplasmic; the sequence is PSVARVELPSENALSMQGGWQDSNVRM. The chain crosses the membrane as a helical span at residues 220–240; it reads LFVASTLMWTCNTMYIIDMPL. The Periplasmic portion of the chain corresponds to 241–251; the sequence is WISSELGLPDK. Residues 252–272 traverse the membrane as a helical segment; that stretch reads LAGFLMGTAAGLEIPAMILAG. The Cytoplasmic segment spans residues 273–282; that stretch reads YYVKRYGKRR. A helical transmembrane segment spans residues 283-303; the sequence is MMVIAVAAGVLFYTGLIFFNS. The Periplasmic portion of the chain corresponds to 304 to 308; it reads RMALM. The helical transmembrane segment at 309 to 329 threads the bilayer; the sequence is TLQLFNAVFIGIVAGIGMLWF. Residues 330–342 are Cytoplasmic-facing; it reads QDLMPGRAGAATT. Residues 343–363 traverse the membrane as a helical segment; that stretch reads LFTNSISTGVILAGVIQGAIA. Topologically, residues 364-365 are periplasmic; it reads QS. The chain crosses the membrane as a helical span at residues 366 to 386; it reads WGHFAVYWVIAVISVVALFLT. Topologically, residues 387–392 are cytoplasmic; that stretch reads AKVKDV.

Belongs to the major facilitator superfamily. Set transporter family.

It is found in the cell inner membrane. Involved in the efflux of sugars. The physiological role may be the detoxification of non-metabolizable sugar analogs. Can transport IPTG, lactose and glucose. Has broad substrate specificity, with preferences for glucosides or galactosides with alkyl or aryl substituents. This chain is Sugar efflux transporter A (setA), found in Escherichia coli (strain K12).